The chain runs to 432 residues: Protein ABHD8 (432 aa).

2 disordered regions span residues 47–69 and 121–149; these read KHAG…QGDQ and PAGS…RPKR. A compositionally biased stretch (pro residues) spans 52–61; that stretch reads APAPTPPPPL. A compositionally biased stretch (basic residues) spans 139–149; sequence GRRRRARRPKR. The 103-residue stretch at 170–272 folds into the AB hydrolase-1 domain; it reads VLFFIHGVGG…HKVIMINGGG (103 aa). Residues serine 245, aspartate 363, and histidine 391 each act as charge relay system in the active site.

This sequence belongs to the AB hydrolase superfamily. As to quaternary structure, interacts with NLRP3 (via NACHT and LLR domains); this interaction is enhanced in the presence of NLRP3 inflammasome inducers, such as ATP, nigericin, silica, or alum. Interacts with ZDHHC12.

Its subcellular location is the cytoplasm. Functionally, negatively regulates NLRP3-driven inflammation. Promotes NLRP3 degradation through the chaperone-mediated autophagy (CMA) pathway, hence attenuating inflammasome activation and IL1B secretion. Acts by recruiting palmitoyltransferase ZDHHC12 to NLRP3, facilitating NLRP3 palmitoylation and subsequent degradation. In Bos taurus (Bovine), this protein is Protein ABHD8.